The primary structure comprises 489 residues: GTPase Der (489 aa).

EngA-type G domains are found at residues 3–166 (PVVA…AEAM) and 200–373 (IKLA…ESAT). GTP is bound by residues 9–16 (GRPNVGKS), 56–60 (DTGGI), 118–121 (NKVD), 206–213 (GKPNVGKS), 253–257 (DTAGV), and 318–321 (NKWD). In terms of domain architecture, KH-like spans 374 to 458 (RRVSTSMLTR…PIQVRFQEGG (85 aa)).

This sequence belongs to the TRAFAC class TrmE-Era-EngA-EngB-Septin-like GTPase superfamily. EngA (Der) GTPase family. Associates with the 50S ribosomal subunit.

Its function is as follows. GTPase that plays an essential role in the late steps of ribosome biogenesis. In Shewanella loihica (strain ATCC BAA-1088 / PV-4), this protein is GTPase Der.